Reading from the N-terminus, the 184-residue chain is Peptide deformylase (184 aa).

Residues cysteine 111 and histidine 154 each coordinate Fe cation. Glutamate 155 is a catalytic residue. Histidine 158 contributes to the Fe cation binding site.

The protein belongs to the polypeptide deformylase family. It depends on Fe(2+) as a cofactor.

It catalyses the reaction N-terminal N-formyl-L-methionyl-[peptide] + H2O = N-terminal L-methionyl-[peptide] + formate. Its function is as follows. Removes the formyl group from the N-terminal Met of newly synthesized proteins. Requires at least a dipeptide for an efficient rate of reaction. N-terminal L-methionine is a prerequisite for activity but the enzyme has broad specificity at other positions. The polypeptide is Peptide deformylase (Lacticaseibacillus casei (strain BL23) (Lactobacillus casei)).